The sequence spans 299 residues: uncharacterized protein (299 aa).

Transmembrane regions (helical) follow at residues 32–52 (FILL…YLHL), 56–76 (SMII…SILY), 199–219 (LAIG…LLGA), 220–240 (YLIA…VKPE), 246–266 (FEIV…PIFG), and 273–293 (FLIS…ILKF).

It is found in the cell membrane. This is an uncharacterized protein from Methanocaldococcus jannaschii (strain ATCC 43067 / DSM 2661 / JAL-1 / JCM 10045 / NBRC 100440) (Methanococcus jannaschii).